The following is a 160-amino-acid chain: Ribosome maturation factor RimP (160 aa).

It belongs to the RimP family.

It is found in the cytoplasm. Required for maturation of 30S ribosomal subunits. The sequence is that of Ribosome maturation factor RimP from Orientia tsutsugamushi (strain Boryong) (Rickettsia tsutsugamushi).